A 441-amino-acid polypeptide reads, in one-letter code: ATP-dependent protease ATPase subunit HslU (441 aa).

ATP is bound by residues I18, 60–65 (GVGKTE), D254, E319, and R391.

Belongs to the ClpX chaperone family. HslU subfamily. As to quaternary structure, a double ring-shaped homohexamer of HslV is capped on each side by a ring-shaped HslU homohexamer. The assembly of the HslU/HslV complex is dependent on binding of ATP.

Its subcellular location is the cytoplasm. Functionally, ATPase subunit of a proteasome-like degradation complex; this subunit has chaperone activity. The binding of ATP and its subsequent hydrolysis by HslU are essential for unfolding of protein substrates subsequently hydrolyzed by HslV. HslU recognizes the N-terminal part of its protein substrates and unfolds these before they are guided to HslV for hydrolysis. This chain is ATP-dependent protease ATPase subunit HslU, found in Shewanella halifaxensis (strain HAW-EB4).